Consider the following 901-residue polypeptide: Schlafen family member 11 (901 aa).

The Mg(2+) site is built by glutamate 209 and glutamate 214. Lysine 216 is an active-site residue. Histidine 285, cysteine 287, cysteine 321, and cysteine 322 together coordinate Zn(2+). 599 to 606 (GLPGSGKT) lines the ATP pocket.

The protein belongs to the Schlafen family. Subgroup III subfamily. In terms of assembly, homodimer. Interacts with MCM3. Interacts with DHX9. Interacts with RPA1. Mg(2+) serves as cofactor. Exhibits a wider expression range in ovarian and colon adenocarcinoma than in their corresponding healthy tissues.

It is found in the nucleus. The protein localises to the chromosome. Functionally, inhibitor of DNA replication that promotes cell death in response to DNA damage. Acts as a guardian of the genome by killing cells with defective replication. Persistently blocks stressed replication forks by opening chromatin across replication initiation sites at stressed replication forks, possibly leading to unwind DNA ahead of the MCM helicase and block fork progression, ultimately leading to cell death. Upon DNA damage, inhibits translation of ATR or ATM based on distinct codon usage without disrupting early DNA damage response signaling. Antiviral restriction factor with manganese-dependent type II tRNA endoribonuclease. A single tRNA molecule is bound and cleaved by the SLFN11 dimer. Specifically abrogates the production of retroviruses such as human immunodeficiency virus 1 (HIV-1) by acting as a specific inhibitor of the synthesis of retroviruses encoded proteins in a codon-usage-dependent manner. Impairs the replication of human cytomegalovirus (HCMV) and some Flaviviruses. Exploits the unique viral codon bias towards A/T nucleotides. Also acts as an interferon (IFN)-induced antiviral protein which acts as an inhibitor of retrovirus protein synthesis. In Homo sapiens (Human), this protein is Schlafen family member 11.